The primary structure comprises 387 residues: Succinyl-diaminopimelate desuccinylase (387 aa).

His-74 is a binding site for Zn(2+). Asp-76 is an active-site residue. Asp-107 serves as a coordination point for Zn(2+). Glu-142 functions as the Proton acceptor in the catalytic mechanism. Residues Glu-143, Glu-171, and His-360 each contribute to the Zn(2+) site.

Belongs to the peptidase M20A family. DapE subfamily. Homodimer. Zn(2+) serves as cofactor. The cofactor is Co(2+).

The catalysed reaction is N-succinyl-(2S,6S)-2,6-diaminopimelate + H2O = (2S,6S)-2,6-diaminopimelate + succinate. Its pathway is amino-acid biosynthesis; L-lysine biosynthesis via DAP pathway; LL-2,6-diaminopimelate from (S)-tetrahydrodipicolinate (succinylase route): step 3/3. Its function is as follows. Catalyzes the hydrolysis of N-succinyl-L,L-diaminopimelic acid (SDAP), forming succinate and LL-2,6-diaminopimelate (DAP), an intermediate involved in the bacterial biosynthesis of lysine and meso-diaminopimelic acid, an essential component of bacterial cell walls. The polypeptide is Succinyl-diaminopimelate desuccinylase (Rhodopseudomonas palustris (strain ATCC BAA-98 / CGA009)).